A 224-amino-acid polypeptide reads, in one-letter code: ATP synthase subunit a (224 aa).

Helical transmembrane passes span 17-37, 78-98, 104-124, 136-156, 176-196, and 201-221; these read FIYM…VKMA, LVAT…VPGF, FLEF…YEGI, FLGP…VSHF, FLMV…YALL, and FLQA…AIAV.

It belongs to the ATPase A chain family. F-type ATPases have 2 components, CF(1) - the catalytic core - and CF(0) - the membrane proton channel. CF(1) has five subunits: alpha(3), beta(3), gamma(1), delta(1), epsilon(1). CF(0) has three main subunits: a(1), b(2) and c(9-12). The alpha and beta chains form an alternating ring which encloses part of the gamma chain. CF(1) is attached to CF(0) by a central stalk formed by the gamma and epsilon chains, while a peripheral stalk is formed by the delta and b chains.

Its subcellular location is the cell inner membrane. Key component of the proton channel; it plays a direct role in the translocation of protons across the membrane. The sequence is that of ATP synthase subunit a from Sulfurimonas denitrificans (strain ATCC 33889 / DSM 1251) (Thiomicrospira denitrificans (strain ATCC 33889 / DSM 1251)).